The following is a 390-amino-acid chain: Peroxisomal sarcosine oxidase (390 aa).

9 to 39 (DAIVIGAGIQGCFTAYHLAKHRKRILLLEQF) provides a ligand contact to FAD. Lysine 126 carries the post-translational modification N6-acetyllysine. Cysteine 319 carries the post-translational modification S-8alpha-FAD cysteine. A Microbody targeting signal motif is present at residues 388–390 (AHL).

This sequence belongs to the MSOX/MTOX family. FAD is required as a cofactor. In terms of tissue distribution, expressed in the liver and kidney.

The protein resides in the peroxisome. It carries out the reaction sarcosine + O2 + H2O = formaldehyde + glycine + H2O2. It catalyses the reaction L-pipecolate + O2 = L-1-piperideine-6-carboxylate + H2O2 + H(+). Metabolizes sarcosine and L-pipecolic acid. In Homo sapiens (Human), this protein is Peroxisomal sarcosine oxidase (PIPOX).